The primary structure comprises 950 residues: Glycine dehydrogenase (decarboxylating) (950 aa).

An N6-(pyridoxal phosphate)lysine modification is found at lysine 698.

It belongs to the GcvP family. In terms of assembly, the glycine cleavage system is composed of four proteins: P, T, L and H. Requires pyridoxal 5'-phosphate as cofactor.

It carries out the reaction N(6)-[(R)-lipoyl]-L-lysyl-[glycine-cleavage complex H protein] + glycine + H(+) = N(6)-[(R)-S(8)-aminomethyldihydrolipoyl]-L-lysyl-[glycine-cleavage complex H protein] + CO2. Its function is as follows. The glycine cleavage system catalyzes the degradation of glycine. The P protein binds the alpha-amino group of glycine through its pyridoxal phosphate cofactor; CO(2) is released and the remaining methylamine moiety is then transferred to the lipoamide cofactor of the H protein. In Neisseria gonorrhoeae (strain ATCC 700825 / FA 1090), this protein is Glycine dehydrogenase (decarboxylating).